A 1390-amino-acid chain; its full sequence is DNA-directed RNA polymerase subunit beta (1390 aa).

It belongs to the RNA polymerase beta chain family. As to quaternary structure, the RNAP catalytic core consists of 2 alpha, 1 beta, 1 beta' and 1 omega subunit. When a sigma factor is associated with the core the holoenzyme is formed, which can initiate transcription.

The catalysed reaction is RNA(n) + a ribonucleoside 5'-triphosphate = RNA(n+1) + diphosphate. Its function is as follows. DNA-dependent RNA polymerase catalyzes the transcription of DNA into RNA using the four ribonucleoside triphosphates as substrates. This chain is DNA-directed RNA polymerase subunit beta, found in Mycoplasma genitalium (strain ATCC 33530 / DSM 19775 / NCTC 10195 / G37) (Mycoplasmoides genitalium).